We begin with the raw amino-acid sequence, 318 residues long: Taste receptor type 2 member 14 (318 aa).

Residues 1 to 7 are Extracellular-facing; the sequence is MGGVIKN. Residues 8 to 28 form a helical membrane-spanning segment; it reads ISTFVLIVEFIIGNLGNSFIA. Topologically, residues 29–55 are cytoplasmic; that stretch reads LVNCIDWVKRRKISLVDQLLTALAISR. The helical transmembrane segment at 56–76 threads the bilayer; it reads ISLVWLIFGSWCVSAFFPALF. Residues 77–87 lie on the Extracellular side of the membrane; the sequence is ATEKMFRMLTN. Positions 86 and 89 each coordinate cholesterol. A helical transmembrane segment spans residues 88–108; it reads IWAVTNHFSVWLATGLGTFYF. Residues 109-129 are Cytoplasmic-facing; the sequence is LKIANFSNSIFIYLKWRVKKV. A helical transmembrane segment spans residues 130 to 150; it reads VLVLLLVTSVFLFLNIALINI. Topologically, residues 151 to 184 are extracellular; that stretch reads HINASINGYGGNKTCSSDSNDFTRFSSLIALTSS. Residues Asn-153 and Asn-162 are each glycosylated (N-linked (GlcNAc...) asparagine). Position 180 (Ala-180) interacts with cholesterol. A helical membrane pass occupies residues 185-205; the sequence is VFIFIPFILSLAIFLLLTFSL. The Cytoplasmic segment spans residues 206–232; the sequence is WKHCKKMQHTVKASGDASTKAHRGVMQ. The helical transmembrane segment at 233 to 253 threads the bilayer; sequence TVIAFLLLYPIFSLSFFIAVW. Topologically, residues 254–261 are extracellular; the sequence is TSGWLEEN. A helical membrane pass occupies residues 262–282; it reads LIILSQVMGMAYPSCHSCILI. Residues Leu-265 and Val-268 each contribute to the cholesterol site. The Cytoplasmic segment spans residues 283-317; that stretch reads LGNKKLRQASLSVLWWLKYRFKDGEPSGHKGFRES.

This sequence belongs to the G-protein coupled receptor T2R family. As to quaternary structure, core component of the TAS2R14-GNAI1 complex, consisting of TAS2R14, GNAI1, GNB1 and GNG2; within the complex interacts with GNAI1. Core component of the TAS2R14-GNAT3 complex, consisting of TAS2R14, GNAT3, GNB1 and GNG2; within the complex interacts with GNAT3. Core component of the TAS2R14-GNAS2 complex, consisting of TAS2R14, GNAS2, GNB1 and GNG2; within the complex interacts with GNAS2.

It is found in the membrane. It catalyses the reaction Ca(2+)(in) = Ca(2+)(out). It carries out the reaction 3',5'-cyclic AMP(in) = 3',5'-cyclic AMP(out). Basal activity is enhanced by binding to bitter tastants, such as flufenamic acid and aristolochic acid. Regulated by cholesterol in a concentration-dependent manner. In terms of biological role, gustducin-linked G-protein coupled receptor that plays a role in the perception of bitterness. The activity of this receptor stimulates GNAT3, activating the gustducin G-protein pathway. Likely plays a role in sensing the chemical composition of the gastrointestinal content and other extra-oral tissues via the inhibitory G-protein pathways. The polypeptide is Taste receptor type 2 member 14 (TAS2R14) (Pongo pygmaeus (Bornean orangutan)).